An 89-amino-acid polypeptide reads, in one-letter code: Cytochrome c6 (89 aa).

4 residues coordinate heme c: Cys-15, Cys-18, His-19, and Met-61.

The protein belongs to the cytochrome c family. PetJ subfamily. Monomer. Post-translationally, binds 1 heme c group covalently per subunit.

Its subcellular location is the plastid. It localises to the chloroplast thylakoid lumen. Functionally, functions as an electron carrier between membrane-bound cytochrome b6-f and photosystem I in oxygenic photosynthesis. This chain is Cytochrome c6 (petJ), found in Tetradesmus obliquus (Green alga).